The sequence spans 300 residues: Small ribosomal subunit protein uS2 (300 aa).

The interval 278–300 (GEAQTGNEGWGTEAAAPAATTQW) is disordered.

Belongs to the universal ribosomal protein uS2 family. As to quaternary structure, component of the small ribosomal subunit. Mature ribosomes consist of a small (40S) and a large (60S) subunit. The 40S subunit contains about 33 different proteins and 1 molecule of RNA (18S). The 60S subunit contains about 49 different proteins and 3 molecules of RNA (25S, 5.8S and 5S). Interacts with rps21.

It is found in the cytoplasm. Its function is as follows. Required for the assembly and/or stability of the 40S ribosomal subunit. Required for the processing of the 20S rRNA-precursor to mature 18S rRNA in a late step of the maturation of 40S ribosomal subunits. This chain is Small ribosomal subunit protein uS2 (rps0), found in Pyrenophora tritici-repentis (strain Pt-1C-BFP) (Wheat tan spot fungus).